Reading from the N-terminus, the 172-residue chain is T-cell receptor gamma chain C region C7.5 (172 aa).

The tract at residues 1–140 is c region; that stretch reads DKKLDADISP…QFTITSAYYT (140 aa). Residues 141 to 160 form a helical membrane-spanning segment; sequence YLLLLLKSVIYLAIISFSLL. The Cytoplasmic segment spans residues 161 to 172; that stretch reads RRTSVCCNEKKS.

The protein localises to the membrane. The sequence is that of T-cell receptor gamma chain C region C7.5 from Mus musculus (Mouse).